The chain runs to 574 residues: MSEEDTSKLRILSVGSNAISAFISWRLSESKACHTTLIWRNRCESVLSEGIRIRSSVFGSTKWKPDVVAPTVEQLAMNSEPFDYIFVCLKILPSVYNLDTAIKEVVTPGHTCIVLNTTGIVGAEKELQHAFPNNPVLSFVLPDQFAQRGPLQFEHTTFAADSAKSVIYVGLTEEEDDVPDSVQDAMIETLTLTLEAGGVSCDFLSKIQKKQWETGVGHMCFYPLSIINDEPNLALMYRLKSFAKVIDGLMDEAFSIAQAQGCEFEPEKLDVLKRHIVNRMLATPRPSYPYQDYIAHRPLEVAVLLGYPVEIAKELGVSVPRMETLLALFDAKNKRNLTVRAGTPQSSPNFNPAMRRSPVGAASRSPSRSTIGISNRIGSVDDLLNTRQFTSSPIGGSMPKGPNSIYKIPSASMVNLSSPLVTSPSGLNPTGRPSRFGGRVRGNPLTMNKAGSVSDLLSTSTNMASSDALETASMIGVPSAMPPNSFDMLTLTQRRNRRNNQSSSPPAPSDRRYTMGARRPVQTRGMTDSVIPILEDPMSTLYDTSRYPTRNSKPATPKASRPPSIASTVHRRMD.

A disordered region spans residues 339–374 (VRAGTPQSSPNFNPAMRRSPVGAASRSPSRSTIGIS). Thr-343 bears the Phosphothreonine mark. Residues 364 to 374 (RSPSRSTIGIS) show a composition bias toward polar residues. The residue at position 392 (Ser-392) is a Phosphoserine. 2 disordered regions span residues 422–451 (TSPSGLNPTGRPSRFGGRVRGNPLTMNKAG) and 495–574 (RNRR…RRMD). The span at 541–554 (LYDTSRYPTRNSKP) shows a compositional bias: polar residues.

The protein resides in the cytoplasm. Its function is as follows. Has a role in meiosis. The sequence is that of Meiotically up-regulated gene 72 protein (mug72) from Schizosaccharomyces pombe (strain 972 / ATCC 24843) (Fission yeast).